Consider the following 429-residue polypeptide: GTPase Obg (429 aa).

The region spanning 1–158 (MFVDHVKIYV…LNVILELKVL (158 aa)) is the Obg domain. The disordered stretch occupies residues 119–143 (AGRGGRGNSRFATPANPAPELSEKG). One can recognise an OBG-type G domain in the interval 159–329 (ADVGLVGFPS…LLFAIADLLE (171 aa)). GTP is bound by residues 165–172 (GFPSVGKS), 190–194 (FTTIV), 212–215 (DLPG), 282–285 (NKMD), and 310–312 (SAV). Mg(2+) is bound by residues serine 172 and threonine 192. In terms of domain architecture, OCT spans 351 to 429 (KHEAKGEDFE…LQEFEFEFVD (79 aa)).

The protein belongs to the TRAFAC class OBG-HflX-like GTPase superfamily. OBG GTPase family. As to quaternary structure, monomer. The cofactor is Mg(2+).

The protein resides in the cytoplasm. In terms of biological role, an essential GTPase which binds GTP, GDP and possibly (p)ppGpp with moderate affinity, with high nucleotide exchange rates and a fairly low GTP hydrolysis rate. Plays a role in control of the cell cycle, stress response, ribosome biogenesis and in those bacteria that undergo differentiation, in morphogenesis control. This Lysinibacillus sphaericus (strain C3-41) protein is GTPase Obg.